The chain runs to 338 residues: Biotin synthase (338 aa).

Residues 50–277 (QAVQLSTLMS…KSYVRLSAGR (228 aa)) form the Radical SAM core domain. The [4Fe-4S] cluster site is built by C65, C69, and C72. Residues C109, C140, C200, and R272 each contribute to the [2Fe-2S] cluster site.

Belongs to the radical SAM superfamily. Biotin synthase family. In terms of assembly, homodimer. Requires [4Fe-4S] cluster as cofactor. It depends on [2Fe-2S] cluster as a cofactor.

The catalysed reaction is (4R,5S)-dethiobiotin + (sulfur carrier)-SH + 2 reduced [2Fe-2S]-[ferredoxin] + 2 S-adenosyl-L-methionine = (sulfur carrier)-H + biotin + 2 5'-deoxyadenosine + 2 L-methionine + 2 oxidized [2Fe-2S]-[ferredoxin]. The protein operates within cofactor biosynthesis; biotin biosynthesis; biotin from 7,8-diaminononanoate: step 2/2. Catalyzes the conversion of dethiobiotin (DTB) to biotin by the insertion of a sulfur atom into dethiobiotin via a radical-based mechanism. The protein is Biotin synthase of Actinobacillus succinogenes (strain ATCC 55618 / DSM 22257 / CCUG 43843 / 130Z).